We begin with the raw amino-acid sequence, 119 residues long: Microtubule nucleation factor SSNA1 (119 aa).

Thr2 carries the post-translational modification N-acetylthreonine. Positions Thr2–Gln32 are important for localization to the centrosome. The stretch at Asn13–Glu70 forms a coiled coil.

Belongs to the SSNA1 family. As to quaternary structure, self-associates to form fibrils. Also forms dimers as well as monomers. Interacts with SPAST. In terms of tissue distribution, widely expressed.

Its subcellular location is the nucleus. The protein resides in the cytoplasm. It is found in the cytoskeleton. The protein localises to the microtubule organizing center. It localises to the centrosome. Its subcellular location is the centriole. The protein resides in the midbody. It is found in the flagellum basal body. The protein localises to the flagellum axoneme. It localises to the cell projection. Its subcellular location is the axon. In terms of biological role, microtubule-binding protein which stabilizes dynamic microtubules by slowing growth and shrinkage at both plus and minus ends and serves as a sensor of microtubule damage, protecting microtubules from the microtubule-severing enzyme SPAST. Induces microtubule branching which is mediated by the formation of long SSNA1 fibrils which guide microtubule protofilaments to split apart from the mother microtubule and form daughter microtubules. Plays a role in axon outgrowth and branching. Required for cell division. The protein is Microtubule nucleation factor SSNA1 of Homo sapiens (Human).